The following is a 280-amino-acid chain: Protein scylla (280 aa).

Residues 39 to 96 (LMSKKAKTTTGGSSNGSNATATSTTTSTSSSIKHKQPAGSSNNNVGQSQSKKTKPSGS) form a disordered region. Low complexity-rich tracts occupy residues 46 to 69 (TTTG…TSSS) and 77 to 96 (GSSN…PSGS).

Belongs to the DDIT4 family.

It is found in the cytoplasm. In terms of biological role, inhibits cell growth by regulating the Tor pathway upstream of the Tsc1-Tsc2 complex and downstream of Akt1. Acts as a cell death activator during head development. The chain is Protein scylla (scyl) from Drosophila melanogaster (Fruit fly).